Here is a 507-residue protein sequence, read N- to C-terminus: Zinc finger protein Aiolos (507 aa).

The interval 1–85 is disordered; the sequence is MEDIQPTVEL…PMGDAEESEM (85 aa). Thr-20 is modified (phosphothreonine). Phosphoserine is present on residues Ser-22 and Ser-42. Basic and acidic residues-rich tracts occupy residues 33 to 46 and 56 to 72; these read KPHE…REAP and DSMK…ENIM. Glycyl lysine isopeptide (Lys-Gly) (interchain with G-Cter in SUMO2) cross-links involve residues Lys-61, Lys-73, and Lys-100. 3 C2H2-type zinc fingers span residues 117-139, 145-167, and 173-195; these read MNCD…KRSH, FQCN…IKLH, and FKCH…LRTH. Residues 201–223 form a C2H2-type 4; atypical zinc finger; sequence YKCEFCGRSYKQRSSLEEHKERC. A Glycyl lysine isopeptide (Lys-Gly) (interchain with G-Cter in SUMO2) cross-link involves residue Lys-244. At Thr-325 the chain carries Phosphothreonine. Positions 370–396 are disordered; that stretch reads LPSERGLSPNNSAQDSTDTDSNHEDRQ. Ser-377 bears the Phosphoserine mark. The C2H2-type 5 zinc finger occupies 450 to 472; sequence FRCDHCHVLFLDYVMFTIHMGCH. Residues 450–502 are mediates homodimerization and heterodimerization; it reads FRCDHCHVLFLDYVMFTIHMGCHGFRDPFECNMCGYRSHDRYEFSSHIARGEH. The segment at 478-502 adopts a C2H2-type 6; atypical zinc-finger fold; sequence FECNMCGYRSHDRYEFSSHIARGEH.

Belongs to the Ikaros C2H2-type zinc-finger protein family. In terms of assembly, homodimer. Heterodimer with other IKAROS family members. Interacts with IKZF4 and IKZF5. Interacts with HRAS. Interacts with FOXP3; this interaction may be required for silencing target genes and regulating the suppressive activity of FOXP3-positive regulatory T-cells (Treg). Interacts with BCL21L isoform Bcl-X(L); this interaction blocks the anti-apoptotic role of BCL21L. Associates with histone deacetylase complexes containing HDAC1, MTA2 and SIN3A. Interacts with IKZF1. Expression is restricted to lymphoid tissues. Expressed at highest levels in spleen and at lower levels in the thymus and bone marrow. First detected in more committed lymphoid progenitors and strongly up-regulated as these differentiate into pre-T and pre-B cell precursors.

It localises to the nucleus. It is found in the cytoplasm. Its function is as follows. Transcription factor that plays an important role in the regulation of lymphocyte differentiation. Binds to GGGAA. Plays an essential role in regulation of B-cell differentiation, proliferation and maturation to an effector state. Involved in regulating BCL2 expression and controlling apoptosis in T-cells in an IL2-dependent manner. The sequence is that of Zinc finger protein Aiolos (Ikzf3) from Mus musculus (Mouse).